The following is a 224-amino-acid chain: Elongation factor 1-beta (224 aa).

This sequence belongs to the EF-1-beta/EF-1-delta family. EF-1 is composed of 4 subunits: alpha, beta (1B-alpha=beta'), delta (1B-beta), and gamma (1B-gamma).

EF-1-beta and EF-1-beta' stimulate the exchange of GDP bound to EF-1-alpha to GTP. The protein is Elongation factor 1-beta of Oryza sativa subsp. japonica (Rice).